Consider the following 609-residue polypeptide: Dihydroxy-acid dehydratase (609 aa).

D82 provides a ligand contact to Mg(2+). [2Fe-2S] cluster is bound at residue C123. Mg(2+)-binding residues include D124 and K125. K125 is modified (N6-carboxylysine). C192 contacts [2Fe-2S] cluster. Mg(2+) is bound at residue E489. Residue S515 is the Proton acceptor of the active site.

It belongs to the IlvD/Edd family. In terms of assembly, homodimer. It depends on [2Fe-2S] cluster as a cofactor. Mg(2+) is required as a cofactor.

The catalysed reaction is (2R)-2,3-dihydroxy-3-methylbutanoate = 3-methyl-2-oxobutanoate + H2O. The enzyme catalyses (2R,3R)-2,3-dihydroxy-3-methylpentanoate = (S)-3-methyl-2-oxopentanoate + H2O. It functions in the pathway amino-acid biosynthesis; L-isoleucine biosynthesis; L-isoleucine from 2-oxobutanoate: step 3/4. The protein operates within amino-acid biosynthesis; L-valine biosynthesis; L-valine from pyruvate: step 3/4. In terms of biological role, functions in the biosynthesis of branched-chain amino acids. Catalyzes the dehydration of (2R,3R)-2,3-dihydroxy-3-methylpentanoate (2,3-dihydroxy-3-methylvalerate) into 2-oxo-3-methylpentanoate (2-oxo-3-methylvalerate) and of (2R)-2,3-dihydroxy-3-methylbutanoate (2,3-dihydroxyisovalerate) into 2-oxo-3-methylbutanoate (2-oxoisovalerate), the penultimate precursor to L-isoleucine and L-valine, respectively. The chain is Dihydroxy-acid dehydratase from Azobacteroides pseudotrichonymphae genomovar. CFP2.